We begin with the raw amino-acid sequence, 998 residues long: Collagen alpha-1(I) chain (998 aa).

Residues Ser1–Gly998 form a disordered region. Low complexity predominate over residues Gly9–Arg22. Pro25, Pro28, Pro30, Pro39, Pro42, Pro45, Pro59, Pro74, Pro80, Pro89, and Pro95 each carry 4-hydroxyproline. Over residues Asn62–Glu76 the composition is skewed to basic and acidic residues. Lys98 is modified (5-hydroxylysine; alternate). O-linked (Gal...) hydroxylysine; alternate glycosylation occurs at Lys98. Ser104 is modified (phosphoserine). The span at Asp112 to Asn128 shows a compositional bias: low complexity. 16 positions are modified to 4-hydroxyproline: Pro122, Pro125, Pro131, Pro140, Pro146, Pro167, Pro176, Pro179, Pro206, Pro209, Pro221, Pro227, Pro236, Pro242, Pro245, and Pro260. Residues Pro146–Ala164 show a composition bias toward low complexity. Over residues Pro166 to Phe178 the composition is skewed to pro residues. The segment covering Ala212–Ser251 has biased composition (low complexity). 5-hydroxylysine is present on Lys263. Residues Pro269, Pro272, Pro284, Pro293, Pro308, Pro314, Pro323, and Pro329 each carry the 4-hydroxyproline modification. The segment covering Gly318–Gly327 has biased composition (gly residues). Lys338 bears the 5-hydroxylysine mark. 4-hydroxyproline is present on residues Pro347, Pro356, Pro362, Pro368, Pro377, Pro380, Pro389, Pro398, Pro404, Pro416, Pro425, Pro434, Pro437, Pro455, Pro472, Pro478, Pro484, Pro490, Pro496, Pro502, Pro514, Pro523, Pro537, Pro543, and Pro552. Residues Lys371 to Arg397 are compositionally biased toward low complexity. Over residues Ala406–Pro425 the composition is skewed to low complexity. Low complexity predominate over residues Pro484–Gln493. A 5-hydroxylysine modification is found at Lys564. A 4-hydroxyproline mark is found at Pro570, Pro585, and Pro591. Low complexity predominate over residues Ser597 to Ala611. Residue Ser600 is modified to Phosphoserine. A 4-hydroxyproline mark is found at Pro612, Pro618, Pro621, Pro630, Pro636, Pro654, Pro663, and Pro672. Low complexity predominate over residues Ala624–Ala651. Over residues Pro653–Pro665 the composition is skewed to pro residues. Position 675 is a 5-hydroxylysine (Lys675). Low complexity predominate over residues Ser680 to Val696. 4-hydroxyproline is present on residues Pro684 and Pro690. The residue at position 698 (Pro698) is a 3-hydroxyproline. 16 positions are modified to 4-hydroxyproline: Pro699, Pro708, Pro711, Pro732, Pro741, Pro749, Pro758, Pro776, Pro785, Pro788, Pro794, Pro809, Pro815, Pro821, Pro830, and Pro836. The segment covering Glu725 to Glu734 has biased composition (low complexity). Over residues Lys746–Pro758 the composition is skewed to low complexity. Residues Pro808–Ala818 show a composition bias toward pro residues. A 5-hydroxylysine modification is found at Lys845. A compositionally biased stretch (pro residues) spans Pro853–Val868. A 4-hydroxyproline mark is found at Pro856, Pro859, and Pro862. Over residues Ala889–Pro903 the composition is skewed to low complexity. The segment covering Arg904–Ile918 has biased composition (basic and acidic residues). 5-hydroxylysine is present on Lys907. 5-hydroxylysine; alternate is present on Lys919. An O-linked (Gal...) hydroxylysine; alternate glycan is attached at Lys919. Pro934, Pro937, Pro955, and Pro970 each carry 4-hydroxyproline. Residues Pro937–Pro970 show a composition bias toward low complexity. Pro975 carries the post-translational modification 3-hydroxyproline. Position 976 is a 4-hydroxyproline (Pro976). The span at Val988–Gly998 shows a compositional bias: pro residues. At Pro990 the chain carries 3-hydroxyproline. Residue Pro991 is modified to 4-hydroxyproline. Position 993 is a 3-hydroxyproline (Pro993). Residue Pro994 is modified to 4-hydroxyproline. Pro996 carries the 3-hydroxyproline modification. Pro997 is modified (4-hydroxyproline).

The protein belongs to the fibrillar collagen family. As to quaternary structure, trimers of one alpha 2(I) and two alpha 1(I) chains. Post-translationally, contains mostly 4-hydroxyproline. Proline residues at the third position of the tripeptide repeating unit (G-X-Y) are hydroxylated in some or all of the chains. Contains 3-hydroxyproline at a few sites. This modification occurs on the first proline residue in the sequence motif Gly-Pro-Hyp, where Hyp is 4-hydroxyproline. In terms of processing, lysine residues at the third position of the tripeptide repeating unit (G-X-Y) are 5-hydroxylated in some or all of the chains. Post-translationally, O-glycosylated on hydroxylated lysine residues. The O-linked glycan consists of a Glc-Gal disaccharide. Expressed in bones.

It is found in the secreted. It localises to the extracellular space. The protein localises to the extracellular matrix. Its function is as follows. Type I collagen is a member of group I collagen (fibrillar forming collagen). The sequence is that of Collagen alpha-1(I) chain from Nothrotheriops shastensis (Shasta ground sloth).